The primary structure comprises 426 residues: Ubiquitin carboxyl-terminal hydrolase 46 (426 aa).

Gly2 carries N-myristoyl glycine lipidation. Residues 27–406 enclose the USP domain; it reads YGLVNFGNTC…SAYILFYQAR (380 aa). Residue Cys36 is the Nucleophile of the active site. Positions 162 to 181 are disordered; the sequence is TAGLPRSDEKGTSERNGGIT. Catalysis depends on His342, which acts as the Proton acceptor.

The protein belongs to the peptidase C19 family. In terms of assembly, interacts with wdr-20 and wdr-48; the catalytic activity of usp-46 is increased in the presence of both wdr-20 and wdr-48. Interacts with glr-1; the interaction results in deubiquitination of glr-1. In terms of tissue distribution, expressed in a number of tissues including the nervous system, pharynx, body wall muscle, vulva muscle and intestine and is detected in many head and ventral cord neurons.

It localises to the perikaryon. The protein localises to the cytoplasm. The catalysed reaction is Thiol-dependent hydrolysis of ester, thioester, amide, peptide and isopeptide bonds formed by the C-terminal Gly of ubiquitin (a 76-residue protein attached to proteins as an intracellular targeting signal).. Regulates the abundance of the glr-1 glutamate receptor in the ventral nerve cord by promoting its deubiquitination and preventing its degradation in the lysosome. Contributes to the regulation of embryonic polarity. This Caenorhabditis elegans protein is Ubiquitin carboxyl-terminal hydrolase 46 (usp-46).